The chain runs to 349 residues: uncharacterized protein (349 aa).

This is an uncharacterized protein from Ostreid herpesvirus 1 (isolate France) (OsHV-1).